A 72-amino-acid polypeptide reads, in one-letter code: MSRRKVCRFTVEGVKEIDYKDVNKLKAYINETGKIVPSRVTGTSAKYQRQLATAIKRARFLALLPYCDRHFN.

Belongs to the bacterial ribosomal protein bS18 family. Part of the 30S ribosomal subunit. Forms a tight heterodimer with protein bS6.

Binds as a heterodimer with protein bS6 to the central domain of the 16S rRNA, where it helps stabilize the platform of the 30S subunit. This Francisella tularensis subsp. holarctica (strain OSU18) protein is Small ribosomal subunit protein bS18.